The following is a 179-amino-acid chain: NADH-quinone oxidoreductase subunit B (179 aa).

[4Fe-4S] cluster is bound by residues Cys-53, Cys-54, Cys-118, and Cys-148.

The protein belongs to the complex I 20 kDa subunit family. NDH-1 is composed of 14 different subunits. Subunits NuoB, C, D, E, F, and G constitute the peripheral sector of the complex. [4Fe-4S] cluster serves as cofactor.

It is found in the cell membrane. It catalyses the reaction a quinone + NADH + 5 H(+)(in) = a quinol + NAD(+) + 4 H(+)(out). Functionally, NDH-1 shuttles electrons from NADH, via FMN and iron-sulfur (Fe-S) centers, to quinones in the respiratory chain. The immediate electron acceptor for the enzyme in this species is believed to be a menaquinone. Couples the redox reaction to proton translocation (for every two electrons transferred, four hydrogen ions are translocated across the cytoplasmic membrane), and thus conserves the redox energy in a proton gradient. The polypeptide is NADH-quinone oxidoreductase subunit B (Bacillus thuringiensis (strain Al Hakam)).